The primary structure comprises 170 residues: J domain-containing protein (170 aa).

The region spanning 17–82 (DYYALLGCDE…SKRALYDKWR (66 aa)) is the J domain. Residues 101–170 (QQSMHWSKPN…VISKFRNYEI (70 aa)) are disordered. Residues 110-120 (NTKDRMLEGEP) are compositionally biased toward basic and acidic residues. Low complexity-rich tracts occupy residues 121 to 135 (GKPS…SNPG) and 142 to 153 (GGAALWGRWGAG).

This chain is J domain-containing protein (jdp), found in Manduca sexta (Tobacco hawkmoth).